Reading from the N-terminus, the 397-residue chain is Dual specificity mitogen-activated protein kinase kinase 2 (397 aa).

The segment at 1 to 21 (MAPKRRPVPLIIAPTGEGQST) is disordered. Residues 69-366 (FDPICELGAG…LKMLMGHTFI (298 aa)) enclose the Protein kinase domain. ATP-binding positions include 75–83 (LGAGNGGVV) and Lys98. The active-site Proton acceptor is the Asp191. Ser219 and Ser223 each carry phosphoserine; by RAF. The tract at residues 284–306 (GGAEGHSMSPRQRPPGRPVSGHG) is disordered.

It belongs to the protein kinase superfamily. STE Ser/Thr protein kinase family. MAP kinase kinase subfamily. Phosphorylation on Ser/Thr by MAP kinase kinase kinases (RAF) positively regulates the kinase activity.

The catalysed reaction is L-seryl-[protein] + ATP = O-phospho-L-seryl-[protein] + ADP + H(+). It carries out the reaction L-threonyl-[protein] + ATP = O-phospho-L-threonyl-[protein] + ADP + H(+). The enzyme catalyses L-tyrosyl-[protein] + ATP = O-phospho-L-tyrosyl-[protein] + ADP + H(+). Its function is as follows. Catalyzes the concomitant phosphorylation of a threonine and a tyrosine residue in a Thr-Glu-Tyr sequence located in MAP kinases. The protein is Dual specificity mitogen-activated protein kinase kinase 2 (map2k2) of Cyprinus carpio (Common carp).